The primary structure comprises 878 residues: Pyruvate, phosphate dikinase (878 aa).

An N-terminal region spans residues 1 to 347 (MKKLIYYFGS…LYILQTRTAK (347 aa)). R96 serves as a coordination point for ATP. Residues 348–404 (RTAIAAIKIAVQMVEEKLISKEQALMRIDPESLNQLLHTRIDYSKGLTSIADGLPAS) form a linker 1 region. Residues 405 to 502 (PGAATGIIVF…ILKQDDIITI (98 aa)) are central. The residue at position 457 (T457) is a Phosphothreonine; by PDRP1. Catalysis depends on H459, which acts as the Tele-phosphohistidine intermediate. Residues 503–537 (DGGTGKVFLGAVPLIQPTFSEESKLILEWADETSK) are linker 2. Positions 538 to 878 (LKIRTNAETV…AAAQAKIKHG (341 aa)) are C-terminal. The substrate site is built by R565, R621, E749, G770, T771, N772, and D773. E749 contributes to the Mg(2+) binding site. D773 provides a ligand contact to Mg(2+). C835 serves as the catalytic Proton donor.

It belongs to the PEP-utilizing enzyme family. As to quaternary structure, homodimer. Mg(2+) is required as a cofactor. Phosphorylation of Thr-457 in the dark inactivates the enzyme. Dephosphorylation upon light stimulation reactivates the enzyme.

It carries out the reaction pyruvate + phosphate + ATP = phosphoenolpyruvate + AMP + diphosphate + H(+). Activated by light-induced dephosphorylation. Inhibited by dark-induced phosphorylation. Both reactions are catalyzed by PDRP1. Catalyzes the reversible phosphorylation of pyruvate and phosphate. The polypeptide is Pyruvate, phosphate dikinase (ppdK) (Rickettsia bellii (strain RML369-C)).